Here is a 177-residue protein sequence, read N- to C-terminus: Secretion monitor (177 aa).

The first 30 residues, 1–30 (MIGILNRWRQFGRRYFWPHLLLGMVAASLG), serve as a signal peptide directing secretion.

It belongs to the SecM family.

The protein localises to the cytoplasm. It is found in the cytosol. Its subcellular location is the periplasm. In terms of biological role, regulates secA expression by translational coupling of the secM secA operon. Translational pausing at a specific Pro residue 5 residues before the end of the protein may allow disruption of a mRNA repressor helix that normally suppresses secA translation initiation. In Yersinia enterocolitica serotype O:8 / biotype 1B (strain NCTC 13174 / 8081), this protein is Secretion monitor.